Reading from the N-terminus, the 220-residue chain is Splicing factor U2AF 26 kDa subunit (220 aa).

The residue at position 2 (A2) is an N-acetylalanine. The C3H1-type 1 zinc-finger motif lies at 12–40 (EKDKVNCSFYFKIGVCRHGDRCSRLHNKP). Positions 65–147 (SHCHVSDVEV…QAVHGELSPV (83 aa)) constitute an RRM domain. A C3H1-type 2 zinc finger spans residues 149-176 (DFRESCCRQYEMGECTRGGFCNFMHLRP). Residues 185–220 (LYGRGPRRRSPPRFHTGHHPRERNHRCSPDHWHGRF) form a disordered region. Residues 189–208 (GPRRRSPPRFHTGHHPRERN) show a composition bias toward basic residues. Positions 209–220 (HRCSPDHWHGRF) are enriched in basic and acidic residues.

The protein belongs to the splicing factor SR family. As to quaternary structure, interacts with GFI1, U2AF2 and C1QBP. Isoform 2 is widely expressed. Isoform 3 is highly expressed in heart, brain and lung, lower expressed in thymus and much lower expressed in peripheral blood leukocytes.

Its subcellular location is the nucleus. It localises to the nucleus speckle. The protein localises to the cytoplasm. Functionally, RNA-binding protein that function as a pre-mRNA splicing factor. Plays a critical role in both constitutive and enhancer-dependent splicing by mediating protein-protein interactions and protein-RNA interactions required for accurate 3'-splice site selection. Acts by enhancing the binding of U2AF2 to weak pyrimidine tracts. Also participates in the regulation of alternative pre-mRNA splicing. Activates exon 5 skipping of PTPRC during T-cell activation; an event reversed by GFI1. Binds to RNA at the AG dinucleotide at the 3'-splice site. Shows a preference for AGC or AGA. This Homo sapiens (Human) protein is Splicing factor U2AF 26 kDa subunit (U2AF1L4).